Consider the following 188-residue polypeptide: Threonylcarbamoyl-AMP synthase (188 aa).

One can recognise a YrdC-like domain in the interval E8 to A188.

The protein belongs to the SUA5 family. TsaC subfamily.

It is found in the cytoplasm. The enzyme catalyses L-threonine + hydrogencarbonate + ATP = L-threonylcarbamoyladenylate + diphosphate + H2O. Functionally, required for the formation of a threonylcarbamoyl group on adenosine at position 37 (t(6)A37) in tRNAs that read codons beginning with adenine. Catalyzes the conversion of L-threonine, HCO(3)(-)/CO(2) and ATP to give threonylcarbamoyl-AMP (TC-AMP) as the acyladenylate intermediate, with the release of diphosphate. This is Threonylcarbamoyl-AMP synthase from Thiobacillus denitrificans (strain ATCC 25259 / T1).